Reading from the N-terminus, the 1065-residue chain is Carbamoyl phosphate synthase large chain (1065 aa).

The tract at residues methionine 1–glutamate 401 is carboxyphosphate synthetic domain. Arginine 129, arginine 169, glycine 175, glycine 176, glutamine 208, valine 210, glutamate 215, glycine 241, valine 242, histidine 243, glutamine 284, and glutamate 298 together coordinate ATP. One can recognise an ATP-grasp 1 domain in the interval lysine 133 to valine 327. Positions 284, 298, and 300 each coordinate Mg(2+). Mn(2+) is bound by residues glutamine 284, glutamate 298, and asparagine 300. The interval glycine 402–asparagine 548 is oligomerization domain. The segment at glutamate 549–glycine 931 is carbamoyl phosphate synthetic domain. The ATP-grasp 2 domain occupies serine 673–threonine 863. ATP-binding residues include arginine 709, lysine 748, isoleucine 750, glutamate 754, glycine 779, valine 780, histidine 781, serine 782, glutamine 822, and glutamate 834. The Mg(2+) site is built by glutamine 822, glutamate 834, and asparagine 836. Glutamine 822, glutamate 834, and asparagine 836 together coordinate Mn(2+). The MGS-like domain occupies isoleucine 932–lysine 1065. The segment at isoleucine 932–lysine 1065 is allosteric domain.

The protein belongs to the CarB family. Composed of two chains; the small (or glutamine) chain promotes the hydrolysis of glutamine to ammonia, which is used by the large (or ammonia) chain to synthesize carbamoyl phosphate. Tetramer of heterodimers (alpha,beta)4. Requires Mg(2+) as cofactor. The cofactor is Mn(2+).

The catalysed reaction is hydrogencarbonate + L-glutamine + 2 ATP + H2O = carbamoyl phosphate + L-glutamate + 2 ADP + phosphate + 2 H(+). It carries out the reaction hydrogencarbonate + NH4(+) + 2 ATP = carbamoyl phosphate + 2 ADP + phosphate + 2 H(+). It functions in the pathway amino-acid biosynthesis; L-arginine biosynthesis; carbamoyl phosphate from bicarbonate: step 1/1. Its pathway is pyrimidine metabolism; UMP biosynthesis via de novo pathway; (S)-dihydroorotate from bicarbonate: step 1/3. In terms of biological role, large subunit of the glutamine-dependent carbamoyl phosphate synthetase (CPSase). CPSase catalyzes the formation of carbamoyl phosphate from the ammonia moiety of glutamine, carbonate, and phosphate donated by ATP, constituting the first step of 2 biosynthetic pathways, one leading to arginine and/or urea and the other to pyrimidine nucleotides. The large subunit (synthetase) binds the substrates ammonia (free or transferred from glutamine from the small subunit), hydrogencarbonate and ATP and carries out an ATP-coupled ligase reaction, activating hydrogencarbonate by forming carboxy phosphate which reacts with ammonia to form carbamoyl phosphate. This is Carbamoyl phosphate synthase large chain from Clostridium acetobutylicum (strain ATCC 824 / DSM 792 / JCM 1419 / IAM 19013 / LMG 5710 / NBRC 13948 / NRRL B-527 / VKM B-1787 / 2291 / W).